The sequence spans 211 residues: Protein-L-isoaspartate O-methyltransferase (211 aa).

The active site involves Ser-59.

The protein belongs to the methyltransferase superfamily. L-isoaspartyl/D-aspartyl protein methyltransferase family.

Its subcellular location is the cytoplasm. It catalyses the reaction [protein]-L-isoaspartate + S-adenosyl-L-methionine = [protein]-L-isoaspartate alpha-methyl ester + S-adenosyl-L-homocysteine. Functionally, catalyzes the methyl esterification of L-isoaspartyl residues in peptides and proteins that result from spontaneous decomposition of normal L-aspartyl and L-asparaginyl residues. It plays a role in the repair and/or degradation of damaged proteins. The polypeptide is Protein-L-isoaspartate O-methyltransferase (Ignicoccus hospitalis (strain KIN4/I / DSM 18386 / JCM 14125)).